The sequence spans 427 residues: MSSIVVVGTQWGDEGKGKITDFLAEQSDVIARFSGGNNAGHTIQFGGETYKLHLVPSGIFYKDKLAVIGNGVVVDPVALLKELDGLNERGIPTSNLRISNRAQVILPYHLAQDEYEERLRGDNKIGTTKKGIGPAYVDKVQRIGIRMADLLEKETFERLLKSNIEYKQAYFKGMFNETCPSFDDIFEEYYAAGQRLKEFVTDTSKILDDAFVADEKVLFEGAQGVMLDIDHGTYPFVTSSNPIAGNVTVGTGVGPTFVSKVIGVCKAYTSRVGDGPFPTELFDEDGHHIREVGREYGTTTGRPRRVGWFDSVVLRHSRRVSGITDLSINSIDVLTGLDTVKICTAYELDGKEITEYPANLDQLKRCKPIFEELPGWTEDVTSVRTLEELPENARKYLERISELCNVQISIFSVGPDREQTNLLKELW.

GTP contacts are provided by residues 12–18 (GDEGKGK) and 40–42 (GHT). Asp-13 (proton acceptor) is an active-site residue. Asp-13 and Gly-40 together coordinate Mg(2+). Residues 13–16 (DEGK), 38–41 (NAGH), Thr-128, Arg-142, Gln-223, Thr-238, and Arg-302 each bind IMP. His-41 acts as the Proton donor in catalysis. 298–304 (TTTGRPR) is a substrate binding site. Residues Arg-304, 330 to 332 (SID), and 412 to 414 (SVG) contribute to the GTP site.

The protein belongs to the adenylosuccinate synthetase family. As to quaternary structure, homodimer. Mg(2+) is required as a cofactor.

The protein localises to the cytoplasm. It carries out the reaction IMP + L-aspartate + GTP = N(6)-(1,2-dicarboxyethyl)-AMP + GDP + phosphate + 2 H(+). It participates in purine metabolism; AMP biosynthesis via de novo pathway; AMP from IMP: step 1/2. Functionally, plays an important role in the de novo pathway of purine nucleotide biosynthesis. Catalyzes the first committed step in the biosynthesis of AMP from IMP. The protein is Adenylosuccinate synthetase of Staphylococcus aureus (strain N315).